The following is a 158-amino-acid chain: NAD(P)H-quinone oxidoreductase subunit J, chloroplastic (158 aa).

It belongs to the complex I 30 kDa subunit family. NDH is composed of at least 16 different subunits, 5 of which are encoded in the nucleus.

Its subcellular location is the plastid. The protein localises to the chloroplast thylakoid membrane. The enzyme catalyses a plastoquinone + NADH + (n+1) H(+)(in) = a plastoquinol + NAD(+) + n H(+)(out). The catalysed reaction is a plastoquinone + NADPH + (n+1) H(+)(in) = a plastoquinol + NADP(+) + n H(+)(out). NDH shuttles electrons from NAD(P)H:plastoquinone, via FMN and iron-sulfur (Fe-S) centers, to quinones in the photosynthetic chain and possibly in a chloroplast respiratory chain. The immediate electron acceptor for the enzyme in this species is believed to be plastoquinone. Couples the redox reaction to proton translocation, and thus conserves the redox energy in a proton gradient. The sequence is that of NAD(P)H-quinone oxidoreductase subunit J, chloroplastic from Oenothera argillicola (Appalachian evening primrose).